The primary structure comprises 20 residues: Phospholipase A2 D5 (20 aa).

The cofactor is Ca(2+). In terms of processing, contains seven disulfide bonds. As to expression, expressed by the venom gland.

The protein resides in the secreted. The catalysed reaction is a 1,2-diacyl-sn-glycero-3-phosphocholine + H2O = a 1-acyl-sn-glycero-3-phosphocholine + a fatty acid + H(+). Functionally, PLA2 catalyzes the calcium-dependent hydrolysis of the 2-acyl groups in 3-sn-phosphoglycerides. This is Phospholipase A2 D5 from Micrurus pyrrhocryptus (Coral snake).